The primary structure comprises 264 residues: ATP synthase subunit a (264 aa).

6 helical membrane-spanning segments follow: residues 29 to 49 (TWHI…LWIF), 90 to 110 (IAPL…MDMI), 134 to 154 (DVNI…YYSI), 177 to 197 (IPVN…SLAL), 208 to 228 (LIFI…SLGV), and 235 to 255 (LIFH…LTIV).

Belongs to the ATPase A chain family. F-type ATPases have 2 components, CF(1) - the catalytic core - and CF(0) - the membrane proton channel. CF(1) has five subunits: alpha(3), beta(3), gamma(1), delta(1), epsilon(1). CF(0) has three main subunits: a(1), b(2) and c(9-12). The alpha and beta chains form an alternating ring which encloses part of the gamma chain. CF(1) is attached to CF(0) by a central stalk formed by the gamma and epsilon chains, while a peripheral stalk is formed by the delta and b chains.

The protein localises to the cell inner membrane. Key component of the proton channel; it plays a direct role in the translocation of protons across the membrane. In Shewanella oneidensis (strain ATCC 700550 / JCM 31522 / CIP 106686 / LMG 19005 / NCIMB 14063 / MR-1), this protein is ATP synthase subunit a.